A 267-amino-acid polypeptide reads, in one-letter code: Methyl-coenzyme M reductase II subunit gamma (267 aa).

R123 is a binding site for coenzyme M.

It belongs to the methyl-coenzyme M reductase gamma subunit family. MCR is a hexamer of two alpha, two beta, and two gamma chains, forming a dimer of heterotrimers. Coenzyme F430 is required as a cofactor.

It catalyses the reaction coenzyme B + methyl-coenzyme M = methane + coenzyme M-coenzyme B heterodisulfide. The protein operates within one-carbon metabolism; methyl-coenzyme M reduction; methane from methyl-coenzyme M: step 1/1. In terms of biological role, component of the methyl-coenzyme M reductase (MCR) I that catalyzes the reductive cleavage of methyl-coenzyme M (CoM-S-CH3 or 2-(methylthio)ethanesulfonate) using coenzyme B (CoB or 7-mercaptoheptanoylthreonine phosphate) as reductant which results in the production of methane and the mixed heterodisulfide of CoB and CoM (CoM-S-S-CoB). This is the final step in methanogenesis. The protein is Methyl-coenzyme M reductase II subunit gamma (mrtG) of Methanothermus fervidus (strain ATCC 43054 / DSM 2088 / JCM 10308 / V24 S).